Here is a 431-residue protein sequence, read N- to C-terminus: tRNA(Ile)-lysidine synthase (431 aa).

An ATP-binding site is contributed by 19-24 (STGIDS).

The protein belongs to the tRNA(Ile)-lysidine synthase family.

Its subcellular location is the cytoplasm. The enzyme catalyses cytidine(34) in tRNA(Ile2) + L-lysine + ATP = lysidine(34) in tRNA(Ile2) + AMP + diphosphate + H(+). Its function is as follows. Ligates lysine onto the cytidine present at position 34 of the AUA codon-specific tRNA(Ile) that contains the anticodon CAU, in an ATP-dependent manner. Cytidine is converted to lysidine, thus changing the amino acid specificity of the tRNA from methionine to isoleucine. The chain is tRNA(Ile)-lysidine synthase from Staphylococcus aureus (strain MW2).